Reading from the N-terminus, the 61-residue chain is Large ribosomal subunit protein bL28 (61 aa).

This sequence belongs to the bacterial ribosomal protein bL28 family.

The chain is Large ribosomal subunit protein bL28 from Nautilia profundicola (strain ATCC BAA-1463 / DSM 18972 / AmH).